Here is a 107-residue protein sequence, read N- to C-terminus: Sperm-specific class P protein 32 (107 aa).

A disordered region spans residues 1-20 (MLTIEPPSATFPASGGSSTH). Positions 1-107 (MLTIEPPSAT…GDVTILLKTN (107 aa)) constitute an MSP domain.

In terms of tissue distribution, expressed at higher level in testis.

This chain is Sperm-specific class P protein 32 (ssp-32), found in Caenorhabditis elegans.